Consider the following 375-residue polypeptide: Queuine tRNA-ribosyltransferase (375 aa).

Aspartate 89 functions as the Proton acceptor in the catalytic mechanism. Substrate is bound by residues aspartate 89–phenylalanine 93, aspartate 143, glutamine 187, and glycine 214. The RNA binding stretch occupies residues glycine 245–aspartate 251. Aspartate 264 functions as the Nucleophile in the catalytic mechanism. An RNA binding; important for wobble base 34 recognition region spans residues threonine 269–arginine 273. Zn(2+) contacts are provided by cysteine 302, cysteine 304, cysteine 307, and histidine 333.

Belongs to the queuine tRNA-ribosyltransferase family. In terms of assembly, homodimer. Within each dimer, one monomer is responsible for RNA recognition and catalysis, while the other monomer binds to the replacement base PreQ1. The cofactor is Zn(2+).

It catalyses the reaction 7-aminomethyl-7-carbaguanine + guanosine(34) in tRNA = 7-aminomethyl-7-carbaguanosine(34) in tRNA + guanine. It functions in the pathway tRNA modification; tRNA-queuosine biosynthesis. Its function is as follows. Catalyzes the base-exchange of a guanine (G) residue with the queuine precursor 7-aminomethyl-7-deazaguanine (PreQ1) at position 34 (anticodon wobble position) in tRNAs with GU(N) anticodons (tRNA-Asp, -Asn, -His and -Tyr). Catalysis occurs through a double-displacement mechanism. The nucleophile active site attacks the C1' of nucleotide 34 to detach the guanine base from the RNA, forming a covalent enzyme-RNA intermediate. The proton acceptor active site deprotonates the incoming PreQ1, allowing a nucleophilic attack on the C1' of the ribose to form the product. After dissociation, two additional enzymatic reactions on the tRNA convert PreQ1 to queuine (Q), resulting in the hypermodified nucleoside queuosine (7-(((4,5-cis-dihydroxy-2-cyclopenten-1-yl)amino)methyl)-7-deazaguanosine). The polypeptide is Queuine tRNA-ribosyltransferase (Shigella flexneri serotype 5b (strain 8401)).